We begin with the raw amino-acid sequence, 571 residues long: Urease subunit alpha (571 aa).

The 439-residue stretch at 133–571 folds into the Urease domain; that stretch reads GGIDTHVHFI…LPLTQRYFLF (439 aa). H138, H140, and K221 together coordinate Ni(2+). The residue at position 221 (K221) is an N6-carboxylysine. Substrate is bound at residue H223. 2 residues coordinate Ni(2+): H250 and H276. Residue H324 is the Proton donor of the active site. Residue D364 participates in Ni(2+) binding.

The protein belongs to the metallo-dependent hydrolases superfamily. Urease alpha subunit family. In terms of assembly, heterotrimer of UreA (gamma), UreB (beta) and UreC (alpha) subunits. Three heterotrimers associate to form the active enzyme. Requires Ni cation as cofactor. In terms of processing, carboxylation allows a single lysine to coordinate two nickel ions.

It localises to the cytoplasm. The enzyme catalyses urea + 2 H2O + H(+) = hydrogencarbonate + 2 NH4(+). It functions in the pathway nitrogen metabolism; urea degradation; CO(2) and NH(3) from urea (urease route): step 1/1. The polypeptide is Urease subunit alpha (Staphylococcus saprophyticus subsp. saprophyticus (strain ATCC 15305 / DSM 20229 / NCIMB 8711 / NCTC 7292 / S-41)).